The sequence spans 1032 residues: Integrin alpha-4 (1032 aa).

An N-terminal signal peptide occupies residues 1-33 (MAWEARREPGPRRAAVRETVMLLLCLGVPTGRP). FG-GAP repeat units lie at residues 35–100 (NVDT…PGQT), 110–177 (NGEP…TELS), 185–237 (QDYV…KYKA), 238–291 (FLDK…EKEL), 292–351 (NILH…GAVM), 355–412 (ETNL…GISS), and 416–478 (QRIE…HPES). Residues 35–977 (NVDTESALLY…HHQRPKRYFT (943 aa)) are Extracellular-facing. The N-linked (GlcNAc...) asparagine glycan is linked to N79. A disulfide bridge links C91 with C101. N138 carries N-linked (GlcNAc...) asparagine glycosylation. 2 cysteine pairs are disulfide-bonded: C144/C165 and C183/C198. A glycan (N-linked (GlcNAc...) asparagine) is linked at N229. Positions 314, 316, 318, 322, 377, 379, 381, 385, 439, 441, 443, 445, and 447 each coordinate Ca(2+). N-linked (GlcNAc...) asparagine glycosylation occurs at N480. Disulfide bonds link C486/C495 and C501/C557. Residues N518 and N538 are each glycosylated (N-linked (GlcNAc...) asparagine). Residues 606–616 (KKEKDIMKKTI) carry the SG1 motif. A disulfide bridge links C622 with C627. N-linked (GlcNAc...) asparagine glycosylation is found at N626, N645, and N660. A disulfide bond links C698 and C711. 2 N-linked (GlcNAc...) asparagine glycosylation sites follow: N806 and N821. 2 cysteine pairs are disulfide-bonded: C852/C890 and C897/C902. The chain crosses the membrane as a helical span at residues 978–1001 (IVIISSSLLLGLIVLLLISYVMWK). Residues 1002–1032 (AGFFKRQYKSILQEENRRDSWSYINSKSNDD) are Cytoplasmic-facing. The GFFKR motif signature appears at 1003–1007 (GFFKR). S1021 carries the phosphoserine modification.

It belongs to the integrin alpha chain family. As to quaternary structure, heterodimer of an alpha and a beta subunit. The alpha subunit can sometimes be cleaved into two non-covalently associated fragments. Alpha-4 associates with either beta-1 or beta-7. Alpha-4 interacts with PXN, LPXN, and TGFB1I1/HIC5. Interacts with CSPG4 through CSPG4 chondroitin sulfate glycosaminoglycan. Interacts with JAML; integrin alpha-4/beta-1 may regulate leukocyte to endothelial cells adhesion by controlling JAML homodimerization. ITGA4:ITGB1 is found in a ternary complex with CX3CR1 and CX3CL1. Interacts with MDK. ITGA4:ITGB1 interacts with MDK; this interaction mediates MDK-induced osteoblast cells migration through PXN phosphorylation. Integrin ITGA4:ITGB1 interacts with SVEP1 (via Sushi domain 21); thereby inhibits Ca(2+) intracellular signaling and as a result represses vasocontraction. ITGA4:ITGB1 interacts with SELP. ITGA4:ITGB1 interacts with BCAM. In terms of processing, phosphorylation on Ser-1027 inhibits PXN binding. In terms of tissue distribution, expressed in vascular smooth muscle cells (at protein level).

The protein resides in the membrane. Its function is as follows. Integrins alpha-4/beta-1 (VLA-4) and alpha-4/beta-7 are receptors for fibronectin. They recognize one or more domains within the alternatively spliced CS-1 and CS-5 regions of fibronectin. They are also receptors for VCAM1. Integrin alpha-4/beta-1 recognizes the sequence Q-I-D-S in VCAM1. Integrin alpha-4/beta-7 is also a receptor for MADCAM1. It recognizes the sequence L-D-T in MADCAM1. On activated endothelial cells integrin VLA-4 triggers homotypic aggregation for most VLA-4-positive leukocyte cell lines. It may also participate in cytolytic T-cell interactions with target cells. ITGA4:ITGB1 binds to fractalkine (CX3CL1) and may act as its coreceptor in CX3CR1-dependent fractalkine signaling. ITGA4:ITGB1 binds to PLA2G2A via a site (site 2) which is distinct from the classical ligand-binding site (site 1) and this induces integrin conformational changes and enhanced ligand binding to site 1. Integrin ITGA4:ITGB1 represses PRKCA-mediated L-type voltage-gated channel Ca(2+) influx and ROCK-mediated calcium sensitivity in vascular smooth muscle cells via its interaction with SVEP1, thereby inhibiting vasocontraction. This Homo sapiens (Human) protein is Integrin alpha-4 (ITGA4).